A 375-amino-acid polypeptide reads, in one-letter code: 23S rRNA (uracil(747)-C(5))-methyltransferase RlmC (375 aa).

Residues Cys3, Cys11, Cys14, and Cys87 each coordinate [4Fe-4S] cluster. S-adenosyl-L-methionine is bound by residues Gln212, Phe241, Glu262, and Asn307. Cys334 acts as the Nucleophile in catalysis.

It belongs to the class I-like SAM-binding methyltransferase superfamily. RNA M5U methyltransferase family. RlmC subfamily.

It carries out the reaction uridine(747) in 23S rRNA + S-adenosyl-L-methionine = 5-methyluridine(747) in 23S rRNA + S-adenosyl-L-homocysteine + H(+). Functionally, catalyzes the formation of 5-methyl-uridine at position 747 (m5U747) in 23S rRNA. This chain is 23S rRNA (uracil(747)-C(5))-methyltransferase RlmC, found in Enterobacter sp. (strain 638).